The primary structure comprises 546 residues: Chaperonin GroEL 3 (546 aa).

ATP contacts are provided by residues 30 to 33, Lys51, 87 to 91, Gly415, and Asp496; these read TLGP and DGTTT.

It belongs to the chaperonin (HSP60) family. Forms a cylinder of 14 subunits composed of two heptameric rings stacked back-to-back. Interacts with the co-chaperonin GroES.

Its subcellular location is the cytoplasm. The enzyme catalyses ATP + H2O + a folded polypeptide = ADP + phosphate + an unfolded polypeptide.. In terms of biological role, together with its co-chaperonin GroES, plays an essential role in assisting protein folding. The GroEL-GroES system forms a nano-cage that allows encapsulation of the non-native substrate proteins and provides a physical environment optimized to promote and accelerate protein folding. This Bradyrhizobium diazoefficiens (strain JCM 10833 / BCRC 13528 / IAM 13628 / NBRC 14792 / USDA 110) protein is Chaperonin GroEL 3.